The sequence spans 1257 residues: Period circadian protein homolog 2 (1257 aa).

The tract at residues 1–60 (MNGYVDFSPSPTSPTKEPGAPQPTQAVLQEDVDMSSGSSGNENCSTGRDSQGSDCDDNGK) is disordered. The span at 35–53 (SSGSSGNENCSTGRDSQGS) shows a compositional bias: polar residues. The Nuclear export signal 1 signature appears at 109–118 (LIRTLKELKV). Residues 179 to 246 (ITSEYIVKNA…FHSYTTPYKL (68 aa)) enclose the PAS 1 domain. An LXXLL motif is present at residues 306–310 (LCCLL). Residues 319-385 (YEAPRIPPEK…MLAIHKKILQ (67 aa)) enclose the PAS 2 domain. The 44-residue stretch at 393–436 (YSPIRFRTRNGEYITLDTSWSSFINPWSRKISFIIGRHKVRVGP) folds into the PAC domain. The short motif at 460–469 (LTEQIHRLLM) is the Nuclear export signal 2 element. 2 disordered regions span residues 471-565 (PVPH…GASL) and 617-638 (PSRKATVSPGLHSGEAARPSKV). An important for protein stability region spans residues 478–482 (SGYGS). Over residues 493–504 (MSQTSSSDSNGQ) the composition is skewed to polar residues. The interval 510–709 (RRSGIFKTSG…GAAGGLSQEK (200 aa)) is CSNK1E binding domain. A phosphoserine mark is found at serine 525, serine 528, serine 531, serine 538, and serine 544. Residue threonine 554 is modified to Phosphothreonine. Phosphoserine is present on residues serine 659, serine 693, serine 697, serine 706, serine 758, and serine 763. The tract at residues 757–832 (RSRAQASDRG…SDTSQSSCPS (76 aa)) is disordered. The Nuclear localization signal signature appears at 778–794 (KKTGKNRKLKSKRVKTR). Positions 779–792 (KTGKNRKLKSKRVK) are enriched in basic residues. The segment covering 821 to 832 (SPSDTSQSSCPS) has biased composition (low complexity). Phosphothreonine is present on threonine 858. The tract at residues 882–1067 (EFAVQPLPFA…DLCSATGSAL (186 aa)) is interaction with PPARG. Phosphoserine is present on serine 939. The residue at position 964 (threonine 964) is a Phosphothreonine. At serine 971 the chain carries Phosphoserine. The short motif at 983–990 (LQLNLLQL) is the Nuclear export signal 3 element. The segment at 994–1044 (PEGSTGAAGTLGTTGTAASGLDCTSGTSRDRQPKAPPTCNEPSDTQNSDAI) is disordered. Low complexity predominate over residues 996-1014 (GSTGAAGTLGTTGTAASGL). Residues 1033–1044 (NEPSDTQNSDAI) are compositionally biased toward polar residues. Residues 1051-1055 (LNLLL) carry the LXXLL motif. Low complexity predominate over residues 1070–1092 (SGASATSDSLGSSSLGFGTSQSG). The disordered stretch occupies residues 1070–1115 (SGASATSDSLGSSSLGFGTSQSGAGSSDTSHTSKYFGSIDSSENNH). Polar residues predominate over residues 1093–1111 (AGSSDTSHTSKYFGSIDSS). Phosphoserine is present on serine 1126. The CRY binding domain stretch occupies residues 1157-1257 (SRDLQAVLKE…LTGPRIEAQT (101 aa)). Residues 1224–1257 (PYEEDSPSPGLCDTSEAKEEEGEQLTGPRIEAQT) are disordered.

In terms of assembly, homodimer. Component of the circadian core oscillator, which includes the CRY proteins, CLOCK or NPAS2, BMAL1 or BMAL2, CSNK1D and/or CSNK1E, TIMELESS, and the PER proteins. Interacts with CLOCK-BMAL1 (off DNA). Interacts with BMAL2. Interacts directly with PER1 and PER3, and through a C-terminal domain, with CRY1 and CRY2. Interacts (via PAS 2 domain) with TIMELESS. Interacts with NFIL3. Different large complexes have been identified with different repressive functions. The core of PER complexes is composed of at least PER1, PER2, PER3, CRY1, CRY2, CSNK1D and/or CSNK1E. The large PER complex involved in the repression of transcriptional termination is composed of at least PER2, CDK9, DDX5, DHX9, NCBP1 and POLR2A (active). The large PER complex involved in the histone deacetylation is composed of at least HDAC1, PER2, SFPQ and SIN3A. The large PER complex involved in the histone methylation is composed of at least PER2, CBX3, TRIM28, SUV39H1 and/or SUV39H2; CBX3 mediates the formation of the complex. Interacts with SETX; the interaction inhibits termination of circadian target genes. Interacts with the nuclear receptors HNF4A, NR1D1, NR4A2, RORA, PPARA, PPARG and THRA; the interaction with at least PPARG is ligand dependent. Interacts with PML. Interacts (phosphorylated) with BTRC and FBXW11; the interactions trigger proteasomal degradation. Interacts with NONO and SFPQ. Interacts with CAVIN3. Interacts with MAGEL2. Interacts with MAP1LC3B. Interacts with HNF4A. Acetylated. Deacetylated by SIRT1, resulting in decreased protein stability. Deacetylated by SIRT6, preventing its degradation by the proteasome, resulting in increased protein stability. In terms of processing, phosphorylated by CSNK1E and CSNK1D. Phosphorylation results in PER2 protein degradation. May be dephosphorylated by PP1. Post-translationally, ubiquitinated, leading to its proteasomal degradation. Ubiquitination may be inhibited by CRY1. As to expression, in the brain, high expression in SCN during the subjective day. Constitutive expression in the cornu ammonis and in the dentate gyrus of the hippocampus. Also expressed in the piriform cortex and the glomeruli of the olfactory bulb, and at a lower extent in the cerebral cortex. Not expressed in the pars tuberalis and the Purkinje neurons. Also expressed in adipose tissue (white and brown), heart, kidney, bladder, lumbar spinal cord, skeletal muscle, spleen, lung, pancreas and liver with highest levels in skeletal muscle and liver and lowest levels in spleen.

It is found in the nucleus. The protein localises to the cytoplasm. Its subcellular location is the perinuclear region. Its function is as follows. Transcriptional repressor which forms a core component of the circadian clock. The circadian clock, an internal time-keeping system, regulates various physiological processes through the generation of approximately 24 hour circadian rhythms in gene expression, which are translated into rhythms in metabolism and behavior. It is derived from the Latin roots 'circa' (about) and 'diem' (day) and acts as an important regulator of a wide array of physiological functions including metabolism, sleep, body temperature, blood pressure, endocrine, immune, cardiovascular, and renal function. Consists of two major components: the central clock, residing in the suprachiasmatic nucleus (SCN) of the brain, and the peripheral clocks that are present in nearly every tissue and organ system. Both the central and peripheral clocks can be reset by environmental cues, also known as Zeitgebers (German for 'timegivers'). The predominant Zeitgeber for the central clock is light, which is sensed by retina and signals directly to the SCN. The central clock entrains the peripheral clocks through neuronal and hormonal signals, body temperature and feeding-related cues, aligning all clocks with the external light/dark cycle. Circadian rhythms allow an organism to achieve temporal homeostasis with its environment at the molecular level by regulating gene expression to create a peak of protein expression once every 24 hours to control when a particular physiological process is most active with respect to the solar day. Transcription and translation of core clock components (CLOCK, NPAS2, BMAL1, BMAL2, PER1, PER2, PER3, CRY1 and CRY2) plays a critical role in rhythm generation, whereas delays imposed by post-translational modifications (PTMs) are important for determining the period (tau) of the rhythms (tau refers to the period of a rhythm and is the length, in time, of one complete cycle). A diurnal rhythm is synchronized with the day/night cycle, while the ultradian and infradian rhythms have a period shorter and longer than 24 hours, respectively. Disruptions in the circadian rhythms contribute to the pathology of cardiovascular diseases, cancer, metabolic syndrome and aging. A transcription/translation feedback loop (TTFL) forms the core of the molecular circadian clock mechanism. Transcription factors, CLOCK or NPAS2 and BMAL1 or BMAL2, form the positive limb of the feedback loop, act in the form of a heterodimer and activate the transcription of core clock genes and clock-controlled genes (involved in key metabolic processes), harboring E-box elements (5'-CACGTG-3') within their promoters. The core clock genes: PER1/2/3 and CRY1/2 which are transcriptional repressors form the negative limb of the feedback loop and interact with the CLOCK|NPAS2-BMAL1|BMAL2 heterodimer inhibiting its activity and thereby negatively regulating their own expression. This heterodimer also activates nuclear receptors NR1D1/2 and RORA/B/G, which form a second feedback loop and which activate and repress BMAL1 transcription, respectively. PER1 and PER2 proteins transport CRY1 and CRY2 into the nucleus with appropriate circadian timing, but also contribute directly to repression of clock-controlled target genes through interaction with several classes of RNA-binding proteins, helicases and others transcriptional repressors. PER appears to regulate circadian control of transcription by at least three different modes. First, interacts directly with the CLOCK-BMAL1 at the tail end of the nascent transcript peak to recruit complexes containing the SIN3-HDAC that remodel chromatin to repress transcription. Second, brings H3K9 methyltransferases such as SUV39H1 and SUV39H2 to the E-box elements of the circadian target genes, like PER2 itself or PER1. The recruitment of each repressive modifier to the DNA seems to be very precisely temporally orchestrated by the large PER complex, the deacetylases acting before than the methyltransferases. Additionally, large PER complexes are also recruited to the target genes 3' termination site through interactions with RNA-binding proteins and helicases that may play a role in transcription termination to regulate transcription independently of CLOCK-BMAL1 interactions. Recruitment of large PER complexes to the elongating polymerase at PER and CRY termination sites inhibited SETX action, impeding RNA polymerase II release and thereby repressing transcriptional reinitiation. May propagate clock information to metabolic pathways via the interaction with nuclear receptors. Coactivator of PPARA and corepressor of NR1D1, binds rhythmically at the promoter of nuclear receptors target genes like BMAL1 or G6PC1. Directly and specifically represses PPARG proadipogenic activity by blocking PPARG recruitment to target promoters and thereby transcriptional activation. Required for fatty acid and lipid metabolism, is involved as well in the regulation of circulating insulin levels. Plays an important role in the maintenance of cardiovascular functions through the regulation of NO and vasodilatatory prostaglandins production in aortas. Controls circadian glutamate uptake in synaptic vesicles through the regulation of VGLUT1 expression. May also be involved in the regulation of inflammatory processes. Represses the CLOCK-BMAL1 induced transcription of BHLHE40/DEC1 and ATF4. Negatively regulates the formation of the TIMELESS-CRY1 complex by competing with TIMELESS for binding to CRY1. The chain is Period circadian protein homolog 2 (Per2) from Mus musculus (Mouse).